Here is a 210-residue protein sequence, read N- to C-terminus: Cytochrome c biogenesis ATP-binding export protein CcmA (210 aa).

The region spanning 4-208 (VPTLSFSKLG…GAIPAQLLEL (205 aa)) is the ABC transporter domain. 39–46 (GANGVGKT) lines the ATP pocket.

The protein belongs to the ABC transporter superfamily. CcmA exporter (TC 3.A.1.107) family. The complex is composed of two ATP-binding proteins (CcmA) and two transmembrane proteins (CcmB).

It localises to the cell inner membrane. The catalysed reaction is heme b(in) + ATP + H2O = heme b(out) + ADP + phosphate + H(+). In terms of biological role, part of the ABC transporter complex CcmAB involved in the biogenesis of c-type cytochromes; once thought to export heme, this seems not to be the case, but its exact role is uncertain. Responsible for energy coupling to the transport system. This chain is Cytochrome c biogenesis ATP-binding export protein CcmA, found in Albidiferax ferrireducens (strain ATCC BAA-621 / DSM 15236 / T118) (Rhodoferax ferrireducens).